Consider the following 425-residue polypeptide: Isocitrate dehydrogenase [NADP] (425 aa).

Residue T114 coordinates NADP(+). S123, N125, R129, R139, and R162 together coordinate D-threo-isocitrate. A Mg(2+)-binding site is contributed by D316. NADP(+) contacts are provided by residues 348-354 (HGTAPKY), N361, Y400, and R404.

Belongs to the isocitrate and isopropylmalate dehydrogenases family. As to quaternary structure, homodimer. Mg(2+) is required as a cofactor. The cofactor is Mn(2+).

It catalyses the reaction D-threo-isocitrate + NADP(+) = 2-oxoglutarate + CO2 + NADPH. Functionally, catalyzes the oxidative decarboxylation of isocitrate to 2-oxoglutarate and carbon dioxide with the concomitant reduction of NADP(+). This Helicobacter pylori (strain J99 / ATCC 700824) (Campylobacter pylori J99) protein is Isocitrate dehydrogenase [NADP] (icd).